The primary structure comprises 148 residues: SsrA-binding protein (148 aa).

The protein belongs to the SmpB family.

The protein resides in the cytoplasm. Functionally, required for rescue of stalled ribosomes mediated by trans-translation. Binds to transfer-messenger RNA (tmRNA), required for stable association of tmRNA with ribosomes. tmRNA and SmpB together mimic tRNA shape, replacing the anticodon stem-loop with SmpB. tmRNA is encoded by the ssrA gene; the 2 termini fold to resemble tRNA(Ala) and it encodes a 'tag peptide', a short internal open reading frame. During trans-translation Ala-aminoacylated tmRNA acts like a tRNA, entering the A-site of stalled ribosomes, displacing the stalled mRNA. The ribosome then switches to translate the ORF on the tmRNA; the nascent peptide is terminated with the 'tag peptide' encoded by the tmRNA and targeted for degradation. The ribosome is freed to recommence translation, which seems to be the essential function of trans-translation. The sequence is that of SsrA-binding protein from Mycoplasma mycoides subsp. mycoides SC (strain CCUG 32753 / NCTC 10114 / PG1).